The sequence spans 89 residues: Small ribosomal subunit protein bS16 (89 aa).

Belongs to the bacterial ribosomal protein bS16 family.

In Chloroflexus aggregans (strain MD-66 / DSM 9485), this protein is Small ribosomal subunit protein bS16.